Reading from the N-terminus, the 105-residue chain is uncharacterized protein (105 aa).

This is an uncharacterized protein from Bacillus subtilis (strain 168).